The sequence spans 98 residues: Large ribosomal subunit protein uL23 (98 aa).

The protein belongs to the universal ribosomal protein uL23 family. In terms of assembly, part of the 50S ribosomal subunit. Contacts protein L29, and trigger factor when it is bound to the ribosome.

Functionally, one of the early assembly proteins it binds 23S rRNA. One of the proteins that surrounds the polypeptide exit tunnel on the outside of the ribosome. Forms the main docking site for trigger factor binding to the ribosome. This is Large ribosomal subunit protein uL23 from Cereibacter sphaeroides (strain ATCC 17029 / ATH 2.4.9) (Rhodobacter sphaeroides).